Reading from the N-terminus, the 277-residue chain is Protein CIMAP1D (277 aa).

STPGR repeat units follow at residues 122-148, 202-227, and 238-263; these read PGPG…LGSR, PGPG…ILGR, and PGPG…MGIR. The tract at residues 181–277 is disordered; sequence PSYTVVGRTP…ASTMVGDTKC (97 aa).

The protein belongs to the CIMAP family.

The chain is Protein CIMAP1D (Cimap1d) from Mus musculus (Mouse).